We begin with the raw amino-acid sequence, 199 residues long: Chorismate pyruvate-lyase (199 aa).

This sequence belongs to the chorismate pyruvate-lyase type 2 family.

The enzyme catalyses chorismate = 4-hydroxybenzoate + pyruvate. Its function is as follows. Removes the pyruvyl group from chorismate to provide 4-hydroxybenzoate (4HB). Involved in the synthesis of glycosylated p-hydroxybenzoic acid methyl esters (p-HBADs) and phenolic glycolipids (PGL) that play important roles in the pathogenesis of mycobacterial infections. This Mycobacterium bovis (strain ATCC BAA-935 / AF2122/97) protein is Chorismate pyruvate-lyase.